A 445-amino-acid polypeptide reads, in one-letter code: Rab GDP dissociation inhibitor beta (445 aa).

Met-1 carries the post-translational modification N-acetylmethionine. At Lys-112 the chain carries N6-acetyllysine. Ser-130 bears the Phosphoserine mark. Position 269 is an N6-acetyllysine (Lys-269). The residue at position 382 (Ser-382) is a Phosphoserine.

This sequence belongs to the Rab GDI family. As to quaternary structure, interacts with RHOH. Interacts with the GDP-bound inactive forms of RAB3A, RAB3B, RAB3C, RAB5A, RAB5B, RAB5C, RAB8A, RAB8B, RAB10, RAB12, RAB35, and RAB43; binds RAB3D to a lesser extent. Interacts with DZIP1; this interaction negatively regulates the interaction of GDI2 with GDP-bound RAB8A.

It is found in the cytoplasm. The protein localises to the membrane. Its subcellular location is the golgi apparatus. The protein resides in the trans-Golgi network. Functionally, GDP-dissociation inhibitor preventing the GDP to GTP exchange of most Rab proteins. By keeping these small GTPases in their inactive GDP-bound form regulates intracellular membrane trafficking. Negatively regulates protein transport to the cilium and ciliogenesis through the inhibition of RAB8A. This is Rab GDP dissociation inhibitor beta (GDI2) from Sus scrofa (Pig).